Here is a 507-residue protein sequence, read N- to C-terminus: Maturase K (507 aa).

The protein belongs to the intron maturase 2 family. MatK subfamily.

The protein localises to the plastid. It localises to the chloroplast. Usually encoded in the trnK tRNA gene intron. Probably assists in splicing its own and other chloroplast group II introns. This chain is Maturase K, found in Browningia hertlingiana (Cactus).